Here is a 229-residue protein sequence, read N- to C-terminus: GTP cyclohydrolase 1 (229 aa).

Residues 1–26 are disordered; that stretch reads MDAKIKPLRGGKPADARPEFQPAELD. Cys118, His121, and Cys189 together coordinate Zn(2+).

It belongs to the GTP cyclohydrolase I family. Toroid-shaped homodecamer, composed of two pentamers of five dimers.

The catalysed reaction is GTP + H2O = 7,8-dihydroneopterin 3'-triphosphate + formate + H(+). It participates in cofactor biosynthesis; 7,8-dihydroneopterin triphosphate biosynthesis; 7,8-dihydroneopterin triphosphate from GTP: step 1/1. The chain is GTP cyclohydrolase 1 from Rhodopseudomonas palustris (strain BisB5).